A 154-amino-acid chain; its full sequence is uncharacterized protein (154 aa).

Coiled-coil stretches lie at residues 8–48 and 89–138; these read DEEV…AIEA and VQEL…RGLV.

This is an uncharacterized protein from Treponema pallidum (strain Nichols).